The following is a 93-amino-acid chain: Phosphoribosyl-ATP pyrophosphatase (93 aa).

The protein belongs to the PRA-PH family.

Its subcellular location is the cytoplasm. It carries out the reaction 1-(5-phospho-beta-D-ribosyl)-ATP + H2O = 1-(5-phospho-beta-D-ribosyl)-5'-AMP + diphosphate + H(+). Its pathway is amino-acid biosynthesis; L-histidine biosynthesis; L-histidine from 5-phospho-alpha-D-ribose 1-diphosphate: step 2/9. The chain is Phosphoribosyl-ATP pyrophosphatase from Mycolicibacterium gilvum (strain PYR-GCK) (Mycobacterium gilvum (strain PYR-GCK)).